Consider the following 733-residue polypeptide: MRIPEFDDIELGAGGGPSGSAEQWRAAVKESVGKSESDLLWETPEGIAVKPLYTGADVEGLDFLETYPGVAPYLRGPYPTMYVNQPWTIRQYAGFSTAEESNAFYRRNLAAGQKGLSVAFDLPTHRGYDSDHPRVTGDVGMAGVAIDSIYDMRQLFDGIPLDKMTVSMTMNGAVLPVLALYIVAAEEQGVPPEKLAGTIQNDILKEFMVRNTYIYPPKPSMRIISDIFAYTSQKMPRYNSISISGYHIQEAGATADLELAYTLADGVEYLRAGQEAGLDVDAFAPRLSFFWAIGMNFFMEVAKLRAARLLWAKLVKQFDPKNAKSLSLRTHSQTSGWSLTAQDVFNNVTRTCVEAMAATQGHTQSLHTNALDEALALPTDFSARIARNTQLLIQQESGTTRTIDPWGGSAYVEKLTYDLARRAWQHIEEVEAAGGMAQAIDAGIPKLRVEEAAARTQARIDSGRQPVIGVNKYRVDTDEQIDVLKVDNSSVRAQQIEKLRRLREERDDAACQDALRALTAAAERGPGQGLEGNLLALAVDAARAKATVGEISDALESVYGRHAGQIRTISGVYRTEAGQSPSVERTRALVDAFDEAEGRRPRILVAKMGQDGHDRGQKVIASAFADLGFDVDVGPLFQTPAEVARQAVEADVHIVGVSSLAAGHLTLVPALREELAAEGRDDIMIVVGGVIPPQDVEALHEAGATAVFPPGTVIPDAAHDLVKRLAADLGHEL.

The segment covering 1–10 has biased composition (acidic residues); that stretch reads MRIPEFDDIE. Residues 1–22 form a disordered region; sequence MRIPEFDDIELGAGGGPSGSAE. Residues Y78, M81, T88, R90, Y92, and S117 each coordinate (R)-methylmalonyl-CoA. F120 and A142 together coordinate cob(II)alamin. (R)-methylmalonyl-CoA-binding residues include T198 and Q200. Residues V209 and R210 each contribute to the cob(II)alamin site. (R)-methylmalonyl-CoA-binding residues include R210, H247, R286, and S288. Residues G336, E373, A376, G612, H613, D614, R615, S658, L660, G689, and T712 each contribute to the cob(II)alamin site. The B12-binding domain maps to 600–732; it reads RPRILVAKMG…KRLAADLGHE (133 aa).

It belongs to the methylmalonyl-CoA mutase family. Heterodimer of an alpha and a beta chain. The cofactor is adenosylcob(III)alamin.

It catalyses the reaction (R)-methylmalonyl-CoA = succinyl-CoA. Its function is as follows. Catalyzes the isomerization of succinyl-CoA to methylmalonyl-CoA during synthesis of propionate from tricarboxylic acid-cycle intermediates. This conversion most likely represents an important source of building blocks for polyketide antibiotic biosynthesis. It is unable to catalyze the conversion of isobutyryl-CoA into N-butyryl-CoA. The protein is Methylmalonyl-CoA mutase large subunit (mutB) of Streptomyces virginiae (Streptomyces cinnamonensis).